Here is a 543-residue protein sequence, read N- to C-terminus: 2-succinyl-5-enolpyruvyl-6-hydroxy-3-cyclohexene-1-carboxylate synthase (543 aa).

The protein belongs to the TPP enzyme family. MenD subfamily. As to quaternary structure, homodimer. Mg(2+) is required as a cofactor. Requires Mn(2+) as cofactor. The cofactor is thiamine diphosphate.

The catalysed reaction is isochorismate + 2-oxoglutarate + H(+) = 5-enolpyruvoyl-6-hydroxy-2-succinyl-cyclohex-3-ene-1-carboxylate + CO2. It participates in quinol/quinone metabolism; 1,4-dihydroxy-2-naphthoate biosynthesis; 1,4-dihydroxy-2-naphthoate from chorismate: step 2/7. Its pathway is quinol/quinone metabolism; menaquinone biosynthesis. Catalyzes the thiamine diphosphate-dependent decarboxylation of 2-oxoglutarate and the subsequent addition of the resulting succinic semialdehyde-thiamine pyrophosphate anion to isochorismate to yield 2-succinyl-5-enolpyruvyl-6-hydroxy-3-cyclohexene-1-carboxylate (SEPHCHC). In Corynebacterium glutamicum (strain R), this protein is 2-succinyl-5-enolpyruvyl-6-hydroxy-3-cyclohexene-1-carboxylate synthase.